The primary structure comprises 105 residues: Phosphoribosyl-AMP cyclohydrolase (105 aa).

Asp72 provides a ligand contact to Mg(2+). Zn(2+) is bound at residue Cys73. Mg(2+) is bound by residues Asp74 and Asp76. Cys89 and Cys96 together coordinate Zn(2+).

This sequence belongs to the PRA-CH family. Homodimer. It depends on Mg(2+) as a cofactor. Zn(2+) is required as a cofactor.

The protein resides in the cytoplasm. The catalysed reaction is 1-(5-phospho-beta-D-ribosyl)-5'-AMP + H2O = 1-(5-phospho-beta-D-ribosyl)-5-[(5-phospho-beta-D-ribosylamino)methylideneamino]imidazole-4-carboxamide. The protein operates within amino-acid biosynthesis; L-histidine biosynthesis; L-histidine from 5-phospho-alpha-D-ribose 1-diphosphate: step 3/9. Its function is as follows. Catalyzes the hydrolysis of the adenine ring of phosphoribosyl-AMP. The polypeptide is Phosphoribosyl-AMP cyclohydrolase (Listeria innocua serovar 6a (strain ATCC BAA-680 / CLIP 11262)).